The sequence spans 1058 residues: Carbamoyl phosphate synthase large chain (1058 aa).

The tract at residues 1–401 (MPKRTDIQKI…SLLKACRSLE (401 aa)) is carboxyphosphate synthetic domain. ATP is bound by residues Arg-129, Arg-169, Gly-175, Gly-176, Arg-208, Ile-210, Glu-215, Gly-241, Ile-242, His-243, Gln-284, and Glu-298. One can recognise an ATP-grasp 1 domain in the interval 133 to 327 (KQLMEELEQP…IAKLAAKIAV (195 aa)). 3 residues coordinate Mg(2+): Gln-284, Glu-298, and Asn-300. Mn(2+)-binding residues include Gln-284, Glu-298, and Asn-300. The segment at 402 to 546 (IGVHHNEIPE…YSTYGWENES (145 aa)) is oligomerization domain. The segment at 547–929 (IRSDKESVLV…ALYKAFEASY (383 aa)) is carbamoyl phosphate synthetic domain. The ATP-grasp 2 domain occupies 671 to 861 (EQALKELDIP…MAQVATKLIL (191 aa)). 10 residues coordinate ATP: Arg-707, Ser-746, Ile-748, Glu-752, Gly-777, Val-778, His-779, Ser-780, Gln-820, and Glu-832. Mg(2+) contacts are provided by Gln-820, Glu-832, and Asn-834. Mn(2+) contacts are provided by Gln-820, Glu-832, and Asn-834. The MGS-like domain maps to 930–1058 (LHLPTFGNVV…ESRSFVTEAI (129 aa)). The interval 930–1058 (LHLPTFGNVV…ESRSFVTEAI (129 aa)) is allosteric domain.

The protein belongs to the CarB family. In terms of assembly, composed of two chains; the small (or glutamine) chain promotes the hydrolysis of glutamine to ammonia, which is used by the large (or ammonia) chain to synthesize carbamoyl phosphate. Tetramer of heterodimers (alpha,beta)4. The cofactor is Mg(2+). Mn(2+) serves as cofactor.

The catalysed reaction is hydrogencarbonate + L-glutamine + 2 ATP + H2O = carbamoyl phosphate + L-glutamate + 2 ADP + phosphate + 2 H(+). The enzyme catalyses hydrogencarbonate + NH4(+) + 2 ATP = carbamoyl phosphate + 2 ADP + phosphate + 2 H(+). It participates in amino-acid biosynthesis; L-arginine biosynthesis; carbamoyl phosphate from bicarbonate: step 1/1. The protein operates within pyrimidine metabolism; UMP biosynthesis via de novo pathway; (S)-dihydroorotate from bicarbonate: step 1/3. Functionally, large subunit of the glutamine-dependent carbamoyl phosphate synthetase (CPSase). CPSase catalyzes the formation of carbamoyl phosphate from the ammonia moiety of glutamine, carbonate, and phosphate donated by ATP, constituting the first step of 2 biosynthetic pathways, one leading to arginine and/or urea and the other to pyrimidine nucleotides. The large subunit (synthetase) binds the substrates ammonia (free or transferred from glutamine from the small subunit), hydrogencarbonate and ATP and carries out an ATP-coupled ligase reaction, activating hydrogencarbonate by forming carboxy phosphate which reacts with ammonia to form carbamoyl phosphate. The polypeptide is Carbamoyl phosphate synthase large chain (Streptococcus pneumoniae (strain Hungary19A-6)).